A 526-amino-acid chain; its full sequence is Dye-decolorizing peroxidase (526 aa).

The signal sequence occupies residues 1–21 (MRKSISTFILLSVLSVGQLVA). A propeptide spanning residues 22-63 (ARPRSTNAPPRRRTPQPRRTTSLFINPPALPDLPTVQAVDKL) is cleaved from the precursor. An N-linked (GlcNAc...) asparagine glycan is attached at N186. The active-site Proton acceptor is the D231. N-linked (GlcNAc...) asparagine glycosylation is present at N367. H376 contributes to the heme binding site. N-linked (GlcNAc...) asparagine glycosylation is found at N473 and N484.

This sequence belongs to the DyP-type peroxidase family. The cofactor is heme b.

It localises to the secreted. The catalysed reaction is Reactive Blue 5 + 2 H2O2 = 2,2'-disulfonyl azobenzene + 3-[(4-amino-6-chloro-1,3,5-triazin-2-yl)amino]benzenesulfonate + phthalate + 2 H2O + 2 H(+). The enzyme catalyses 2 a phenolic donor + H2O2 = 2 a phenolic radical donor + 2 H2O. Manganese-independent peroxidase that is able to convert a large number of compounds, but its physiological substrate is not known. In addition to classic peroxidase substrates (e.g. 2,6-dimethoxyphenol), oxidizes dyes such as Reactive Blue 5 and Reactive Black 5. In Mycena epipterygia (Yellow-stemmed mycena), this protein is Dye-decolorizing peroxidase.